We begin with the raw amino-acid sequence, 180 residues long: MDIGTISSRYAKALFSLAKDKEQESRVYDDMKMLADSFSMEPELRGALSNPIVSVPEKVKLLTAAGGIEVCELYSRFINLVLAHKRETLLPFIAYIYIHLYRKEKKITRVRFDTAVAVDDAVKSHLQDKLRKETGCTIEFSGHVEPELIGGFRLRIGNYRIDASYATQLRDIRTGLLENR.

This sequence belongs to the ATPase delta chain family. F-type ATPases have 2 components, F(1) - the catalytic core - and F(0) - the membrane proton channel. F(1) has five subunits: alpha(3), beta(3), gamma(1), delta(1), epsilon(1). F(0) has three main subunits: a(1), b(2) and c(10-14). The alpha and beta chains form an alternating ring which encloses part of the gamma chain. F(1) is attached to F(0) by a central stalk formed by the gamma and epsilon chains, while a peripheral stalk is formed by the delta and b chains.

The protein localises to the cell inner membrane. In terms of biological role, f(1)F(0) ATP synthase produces ATP from ADP in the presence of a proton or sodium gradient. F-type ATPases consist of two structural domains, F(1) containing the extramembraneous catalytic core and F(0) containing the membrane proton channel, linked together by a central stalk and a peripheral stalk. During catalysis, ATP synthesis in the catalytic domain of F(1) is coupled via a rotary mechanism of the central stalk subunits to proton translocation. Its function is as follows. This protein is part of the stalk that links CF(0) to CF(1). It either transmits conformational changes from CF(0) to CF(1) or is implicated in proton conduction. The sequence is that of ATP synthase subunit delta from Parabacteroides distasonis (strain ATCC 8503 / DSM 20701 / CIP 104284 / JCM 5825 / NCTC 11152).